Consider the following 1499-residue polypeptide: Rap guanine nucleotide exchange factor 2 (1499 aa).

Disordered stretches follow at residues 40 to 59 and 68 to 101; these read HVSS…SSSL and SEAG…SDPL. Over residues 83-94 the composition is skewed to acidic residues; the sequence is VDSEDDDDEEDI. 135-254 provides a ligand contact to a nucleoside 3',5'-cyclic phosphate; sequence AFANMTMSVR…VEEEGEIVMV (120 aa). An N-terminal Ras-GEF domain is found at 267–380; it reads KGHIVIKGTS…RLLNIACAAK (114 aa). The region spanning 385–470 is the PDZ domain; it reads LMTLTKPSRE…ITVKTNLFVF (86 aa). At Ser-501 the chain carries Phosphoserine. Residues 606-692 form the Ras-associating domain; the sequence is PDQVLRVFKA…GRYYLKNNME (87 aa). Thr-644 carries the post-translational modification Phosphothreonine; by PLK2. The region spanning 717–944 is the Ras-GEF domain; that stretch reads STVEVATQLS…SQGSTNATVL (228 aa). At Ser-806 the chain carries Phosphoserine; by PLK2. Ser-930 is subject to Phosphoserine. A Phosphoserine; by PLK2 modification is found at Ser-933. Positions 1002-1050 are disordered; it reads PATNTLPKNPGDKKPVKSETSPVAPRAGSQQKAQSLPQPQQQPPPAHKI. The residue at position 1022 (Ser-1022) is a Phosphoserine. A compositionally biased stretch (low complexity) spans 1031–1040; it reads QQKAQSLPQP. Phosphoserine is present on residues Ser-1080, Ser-1089, Ser-1095, Ser-1116, Ser-1120, and Ser-1159. Positions 1095–1160 are disordered; sequence SLERHKKQAE…RSSIVSNSSF (66 aa). Low complexity-rich tracts occupy residues 1111–1125 and 1141–1160; these read SSQL…QSSP and SDSG…NSSF. The residue at position 1176 (Ser-1176) is a Phosphoserine; by PLK2. 2 disordered regions span residues 1224–1256 and 1305–1499; these read PSTE…SSGS and TKYN…VSAV. Composition is skewed to polar residues over residues 1247-1256 and 1307-1331; these read GSWTSCSSGS and YNRQ…SSTG. Low complexity predominate over residues 1355–1366; the sequence is EAESSSLTSVTT. Residues 1441-1462 show a composition bias toward polar residues; sequence SSDTAGPSSVQQPHGHPTSSRP. A compositionally biased stretch (acidic residues) spans 1488 to 1499; that stretch reads TEEDEDEQVSAV.

This sequence belongs to the RAPGEF2 family. As to quaternary structure, interacts with CDH1, CTNNB1 and TJP1. Interacts (via C-terminal domain) with MAGI2 (via PDZ and WW domains); the interaction occurs before or after NGF stimulation. Interacts with KIDINS220 and NTRK1; the interactions occur after NGF stimulation. Found in a complex, at least composed of KIDINS220, MAGI2, NTRK1 and RAPGEF2; the complex is mainly formed at late endosomes in a neuronal growth factor (NGF)-dependent manner. Interacts (via C-terminal domain) with NEDD4 (via WW domains); this interaction leads to ubiquitination and degradation via the proteasome pathway in a cAMP-independent manner. Interacts with MAGI1 isoform 3 (via PDZ domain). Interacts with ADRB1 (via C-terminal PDZ motif); the interaction is direct. Interacts (via Ras-associating domain) with RAP1A (via GTP-bound active form). Interacts weakly with HRAS (via GDP- and GTP-bound forms). Interacts (via C-terminal domain) with MAGI2 (via PDZ and WW domains). Post-translationally, ubiquitinated by NEDD4, leading to proteasomal degradation. In terms of processing, phosphorylation by PLK2 promotes its activity. As to expression, expressed in primary neuronal and endocrine cells (at protein level). Highest expression levels in brain. Lower expression levels in heart, kidney, lung, placenta and blood leukocytes.

The protein localises to the cytoplasm. Its subcellular location is the perinuclear region. It localises to the cell membrane. It is found in the late endosome. The protein resides in the cell junction. Its function is as follows. Functions as a guanine nucleotide exchange factor (GEF), which activates Rap and Ras family of small GTPases by exchanging bound GDP for free GTP in a cAMP-dependent manner. Serves as a link between cell surface receptors and Rap/Ras GTPases in intracellular signaling cascades. Also acts as an effector for Rap1 by direct association with Rap1-GTP thereby leading to the amplification of Rap1-mediated signaling. Shows weak activity on HRAS. It is controversial whether RAPGEF2 binds cAMP and cGMP or not. Its binding to ligand-activated beta-1 adrenergic receptor ADRB1 leads to the Ras activation through the G(s)-alpha signaling pathway. Involved in the cAMP-induced Ras and Erk1/2 signaling pathway that leads to sustained inhibition of long term melanogenesis by reducing dendrite extension and melanin synthesis. Also provides inhibitory signals for cell proliferation of melanoma cells and promotes their apoptosis in a cAMP-independent nanner. Regulates cAMP-induced neuritogenesis by mediating the Rap1/B-Raf/ERK signaling through a pathway that is independent on both PKA and RAPGEF3/RAPGEF4. Involved in neuron migration and in the formation of the major forebrain fiber connections forming the corpus callosum, the anterior commissure and the hippocampal commissure during brain development. Involved in neuronal growth factor (NGF)-induced sustained activation of Rap1 at late endosomes and in brain-derived neurotrophic factor (BDNF)-induced axon outgrowth of hippocampal neurons. Plays a role in the regulation of embryonic blood vessel formation and in the establishment of basal junction integrity and endothelial barrier function. May be involved in the regulation of the vascular endothelial growth factor receptor KDR and cadherin CDH5 expression at allantois endothelial cell-cell junctions. The protein is Rap guanine nucleotide exchange factor 2 (RAPGEF2) of Homo sapiens (Human).